Here is a 794-residue protein sequence, read N- to C-terminus: Signal transducer and activator of transcription 5A (794 aa).

Tyr-90 carries the phosphotyrosine modification. At Ser-128 the chain carries Phosphoserine. In terms of domain architecture, SH2 spans 589–686; it reads WNDGAILGFV…EVFSKYYTPV (98 aa). Residue Tyr-682 is modified to Phosphotyrosine. Residue Tyr-694 is modified to Phosphotyrosine; by JAK2. The segment at 771-794 is disordered; it reads PMDSLEPSLPPPTGLFTPGRGSLS.

This sequence belongs to the transcription factor STAT family. In terms of assembly, forms a homodimer or a heterodimer with a related family member. Binds NR3C1. Interacts with NCOA1 and SOCS7. Interacts with ERBB4. Interacts with EBF4. Interacts with CD69. Post-translationally, ISGylated. Tyrosine phosphorylated in response to KITLG/SCF, IL2, IL3, IL7, IL15, CSF2/GMCSF, GH1, PRL, EPO and THPO. Activated KIT promotes phosphorylation on tyrosine residues and subsequent translocation to the nucleus. Tyrosine phosphorylated in response to constitutively activated FGFR1, FGFR2, FGFR3 and FGFR4. Tyrosine phosphorylation is required for DNA-binding activity and dimerization. Serine phosphorylation is also required for maximal transcriptional activity. Tyrosine phosphorylated in response to signaling via activated FLT3; wild-type FLT3 results in much weaker phosphorylation than constitutively activated mutant FLT3. Alternatively, can be phosphorylated by JAK2 at Tyr-694.

The protein resides in the cytoplasm. It is found in the nucleus. In terms of biological role, carries out a dual function: signal transduction and activation of transcription. Mediates cellular responses to the cytokine KITLG/SCF and other growth factors. May mediate cellular responses to activated FGFR1, FGFR2, FGFR3 and FGFR4. Binds to the GAS element and activates PRL-induced transcription. Regulates the expression of milk proteins during lactation. In Bos taurus (Bovine), this protein is Signal transducer and activator of transcription 5A (STAT5A).